A 374-amino-acid polypeptide reads, in one-letter code: N-acetyldiaminopimelate deacetylase (374 aa).

Residue Asp69 is part of the active site. Residue Glu128 is the Proton acceptor of the active site.

The protein belongs to the peptidase M20A family. N-acetyldiaminopimelate deacetylase subfamily.

The enzyme catalyses N-acetyl-(2S,6S)-2,6-diaminopimelate + H2O = (2S,6S)-2,6-diaminopimelate + acetate. The protein operates within amino-acid biosynthesis; L-lysine biosynthesis via DAP pathway; LL-2,6-diaminopimelate from (S)-tetrahydrodipicolinate (acetylase route): step 3/3. Functionally, catalyzes the conversion of N-acetyl-diaminopimelate to diaminopimelate and acetate. This chain is N-acetyldiaminopimelate deacetylase, found in Bacillus velezensis (strain DSM 23117 / BGSC 10A6 / LMG 26770 / FZB42) (Bacillus amyloliquefaciens subsp. plantarum).